The following is a 142-amino-acid chain: MSLTKTEGTIIVSMWAKISTQADTIGTETLERLFLSHPQTKTYFPHFDLHPGSAQLRAHGSKVVAAVGDAVKSIDNIGGALSKLSELHAYILRVDPVNFKLLSHCLLVTLAARFPADFTAEAHAAWDKFLSVVSSVLTEKYR.

Ser2 is modified (N-acetylserine). Residues Ser2–Arg142 enclose the Globin domain. Residue Thr29 is modified to Phosphothreonine. Ser53 is subject to Phosphoserine. Residue His59 coordinates heme b. 2 positions are modified to phosphoserine: Ser73 and Ser82. A heme b-binding site is contributed by His88.

This sequence belongs to the globin family. Heterotetramer of two zeta chains and beta-type chains.

Functionally, the zeta chain is an alpha-type chain of mammalian embryonic hemoglobin. The polypeptide is Hemoglobin subunit zeta (HBZ1) (Pan troglodytes (Chimpanzee)).